Here is a 146-residue protein sequence, read N- to C-terminus: Cyanate hydratase (146 aa).

Catalysis depends on residues R87, E90, and S113.

It belongs to the cyanase family.

It carries out the reaction cyanate + hydrogencarbonate + 3 H(+) = NH4(+) + 2 CO2. Functionally, catalyzes the reaction of cyanate with bicarbonate to produce ammonia and carbon dioxide. This Marinomonas sp. (strain MWYL1) protein is Cyanate hydratase.